Here is a 1524-residue protein sequence, read N- to C-terminus: DNA-directed RNA polymerase subunit beta' (1524 aa).

Residues Cys58, Cys60, Cys73, and Cys76 each contribute to the Zn(2+) site. Mg(2+) contacts are provided by Asp739, Asp741, and Asp743. Zn(2+) is bound by residues Cys1112, Cys1194, Cys1201, and Cys1204. Positions 1501 to 1524 are disordered; the sequence is EAVEAKERPAARRGVKREQPGKQA.

This sequence belongs to the RNA polymerase beta' chain family. The RNAP catalytic core consists of 2 alpha, 1 beta, 1 beta' and 1 omega subunit. When a sigma factor is associated with the core the holoenzyme is formed, which can initiate transcription. The cofactor is Mg(2+). It depends on Zn(2+) as a cofactor.

It carries out the reaction RNA(n) + a ribonucleoside 5'-triphosphate = RNA(n+1) + diphosphate. Functionally, DNA-dependent RNA polymerase catalyzes the transcription of DNA into RNA using the four ribonucleoside triphosphates as substrates. The sequence is that of DNA-directed RNA polymerase subunit beta' from Thermus thermophilus (strain ATCC BAA-163 / DSM 7039 / HB27).